Here is a 109-residue protein sequence, read N- to C-terminus: ATP synthase subunit c (109 aa).

The next 2 membrane-spanning stretches (helical) occupy residues Y42–S62 and L88–V108.

This sequence belongs to the ATPase C chain family. In terms of assembly, F-type ATPases have 2 components, F(1) - the catalytic core - and F(0) - the membrane proton channel. F(1) has five subunits: alpha(3), beta(3), gamma(1), delta(1), epsilon(1). F(0) has three main subunits: a(1), b(2) and c(10-14). The alpha and beta chains form an alternating ring which encloses part of the gamma chain. F(1) is attached to F(0) by a central stalk formed by the gamma and epsilon chains, while a peripheral stalk is formed by the delta and b chains.

The protein localises to the cell membrane. In terms of biological role, f(1)F(0) ATP synthase produces ATP from ADP in the presence of a proton or sodium gradient. F-type ATPases consist of two structural domains, F(1) containing the extramembraneous catalytic core and F(0) containing the membrane proton channel, linked together by a central stalk and a peripheral stalk. During catalysis, ATP synthesis in the catalytic domain of F(1) is coupled via a rotary mechanism of the central stalk subunits to proton translocation. Functionally, key component of the F(0) channel; it plays a direct role in translocation across the membrane. A homomeric c-ring of between 10-14 subunits forms the central stalk rotor element with the F(1) delta and epsilon subunits. The chain is ATP synthase subunit c from Ureaplasma parvum serovar 3 (strain ATCC 27815 / 27 / NCTC 11736).